Consider the following 195-residue polypeptide: MGVRGRLALLPLALLCLLVLALGLPVLGAPARLICDSRVLERYILEAKEAENVTMGCAEGCSLGENITVPDTKVNFHHWKKSEAGRHAVEVWQGLALLSEAMLRSQALLANSSQLPETLQVHVDKAVSGLRSLTSLLRALGVQKEAVSPPEAASSAAPLRTVAADTLCKLFRIYSNFLRGKLKLYTGEACRRGDR.

The first 28 residues, 1–28, serve as a signal peptide directing secretion; that stretch reads MGVRGRLALLPLALLCLLVLALGLPVLG. 2 disulfide bridges follow: Cys-35-Cys-190 and Cys-57-Cys-61. An N-linked (GlcNAc...) asparagine glycan is attached at Asn-52. N-linked (GlcNAc...) asparagine glycosylation is found at Asn-66 and Asn-111.

Belongs to the EPO/TPO family.

It is found in the secreted. Hormone involved in the regulation of erythrocyte proliferation and differentiation and the maintenance of a physiological level of circulating erythrocyte mass. Binds to EPOR leading to EPOR dimerization and JAK2 activation thereby activating specific downstream effectors, including STAT1 and STAT3. This is Erythropoietin (EPO) from Oryctolagus cuniculus (Rabbit).